We begin with the raw amino-acid sequence, 320 residues long: D-amino-acid oxidase (320 aa).

12 residues coordinate FAD: glycine 18, glycine 19, valine 20, isoleucine 21, threonine 47, threonine 48, serine 49, glycine 53, glycine 54, leucine 55, valine 161, and threonine 176. D-proline contacts are provided by tyrosine 220 and arginine 275. D-serine is bound by residues tyrosine 220 and arginine 275. Positions 275, 301, 302, 304, and 306 each coordinate FAD. Glycine 302 contacts D-proline. Glycine 302 lines the D-serine pocket.

The protein belongs to the DAMOX/DASOX family. FAD is required as a cofactor.

Its subcellular location is the cytoplasm. It localises to the secreted. The protein localises to the cell wall. It catalyses the reaction a D-alpha-amino acid + O2 + H2O = a 2-oxocarboxylate + H2O2 + NH4(+). The enzyme catalyses D-leucine + O2 + H2O = 4-methyl-2-oxopentanoate + H2O2 + NH4(+). The catalysed reaction is D-valine + O2 + H2O = 3-methyl-2-oxobutanoate + H2O2 + NH4(+). It carries out the reaction D-isoleucine + O2 + H2O = (R)-3-methyl-2-oxopentanoate + H2O2 + NH4(+). It catalyses the reaction D-methionine + O2 + H2O = 4-methylsulfanyl-2-oxobutanoate + H2O2 + NH4(+). Catalyzes the oxidative deamination of D-amino acids with broad substrate specificity. The protein is D-amino-acid oxidase of Streptomyces coelicolor (strain ATCC BAA-471 / A3(2) / M145).